Reading from the N-terminus, the 194-residue chain is RNA polymerase II subunit A C-terminal domain phosphatase SSU72 like protein 2 (194 aa).

It belongs to the SSU72 phosphatase family.

It localises to the nucleus. The catalysed reaction is O-phospho-L-seryl-[protein] + H2O = L-seryl-[protein] + phosphate. It catalyses the reaction O-phospho-L-threonyl-[protein] + H2O = L-threonyl-[protein] + phosphate. Protein phosphatase that catalyzes the dephosphorylation of the C-terminal domain of RNA polymerase II. Plays a role in RNA processing and termination. The sequence is that of RNA polymerase II subunit A C-terminal domain phosphatase SSU72 like protein 2 from Homo sapiens (Human).